The sequence spans 212 residues: Prolactin-3C1 (212 aa).

The first 29 residues, 1-29 (MQLSLTQARTWKGLFLLVSCMFLWVYVTA), serve as a signal peptide directing secretion. C80 and C188 are joined by a disulfide. The N-linked (GlcNAc...) asparagine glycan is linked to N100.

It belongs to the somatotropin/prolactin family. Expressed exclusively in decidua.

The protein localises to the secreted. This Mus musculus (Mouse) protein is Prolactin-3C1 (Prl3c1).